Reading from the N-terminus, the 583-residue chain is Arginine--tRNA ligase (583 aa).

The 'HIGH' region motif lies at 123–133; it reads PNIAKEMHVGH.

The protein belongs to the class-I aminoacyl-tRNA synthetase family. As to quaternary structure, monomer.

The protein localises to the cytoplasm. The enzyme catalyses tRNA(Arg) + L-arginine + ATP = L-arginyl-tRNA(Arg) + AMP + diphosphate. This Blochmanniella floridana protein is Arginine--tRNA ligase.